We begin with the raw amino-acid sequence, 205 residues long: LexA repressor (205 aa).

The segment at residues 29 to 49 (IRDICKATGLRSSSTVYNYLN) is a DNA-binding region (H-T-H motif). Residues S128 and K165 each act as for autocatalytic cleavage activity in the active site.

It belongs to the peptidase S24 family. Homodimer.

The enzyme catalyses Hydrolysis of Ala-|-Gly bond in repressor LexA.. Functionally, represses a number of genes involved in the response to DNA damage (SOS response), including recA and lexA. In the presence of single-stranded DNA, RecA interacts with LexA causing an autocatalytic cleavage which disrupts the DNA-binding part of LexA, leading to derepression of the SOS regulon and eventually DNA repair. This chain is LexA repressor, found in Moorella thermoacetica (strain ATCC 39073 / JCM 9320).